A 225-amino-acid chain; its full sequence is MDVVFALGGSVLMPKEGASTENIQNYAEAFKKLKEMGHRVSVVVGGGNTARQYISVAREFTNESFCDEIGILATRMNSMLLISALGKDAVKHVPENFKDAELILNMDKILVMGGTHPAHTTDAVSATLAEFIDADLLVIATNVDGVYDKDPRCNEDAVKLDKINTKELLEITGSASMSAGSSGVVDPLASKIIDRAKLKTIVVKGIPEEILASVTENHNGTTITP.

Residue 9–10 (GS) coordinates ATP. Position 46 (Gly46) interacts with UMP. ATP contacts are provided by Gly47 and Arg51. UMP-binding positions include Asp67 and 115-121 (THPAHTT). Positions 141, 142, 147, and 150 each coordinate ATP.

It belongs to the UMP kinase family. In terms of assembly, homohexamer.

The protein localises to the cytoplasm. It catalyses the reaction UMP + ATP = UDP + ADP. Its pathway is pyrimidine metabolism; CTP biosynthesis via de novo pathway; UDP from UMP (UMPK route): step 1/1. With respect to regulation, inhibited by UTP. In terms of biological role, catalyzes the reversible phosphorylation of UMP to UDP. The sequence is that of Uridylate kinase from Methanococcus maripaludis (strain C6 / ATCC BAA-1332).